Here is a 457-residue protein sequence, read N- to C-terminus: tRNA modification GTPase MnmE (457 aa).

The (6S)-5-formyl-5,6,7,8-tetrahydrofolate site is built by Arg-23, Glu-86, and Arg-125. The region spanning 221 to 377 (GVSVLIAGKP…LREAVFETFI (157 aa)) is the TrmE-type G domain. Residue Asn-231 participates in K(+) binding. Residues 231–236 (NVGKSS), 250–256 (TSVPGTT), and 275–278 (DTAG) each bind GTP. Ser-235 is a binding site for Mg(2+). K(+)-binding residues include Thr-250, Val-252, and Thr-255. Thr-256 serves as a coordination point for Mg(2+). Lys-457 contacts (6S)-5-formyl-5,6,7,8-tetrahydrofolate.

Belongs to the TRAFAC class TrmE-Era-EngA-EngB-Septin-like GTPase superfamily. TrmE GTPase family. Homodimer. Heterotetramer of two MnmE and two MnmG subunits. K(+) is required as a cofactor.

The protein localises to the cytoplasm. Exhibits a very high intrinsic GTPase hydrolysis rate. Involved in the addition of a carboxymethylaminomethyl (cmnm) group at the wobble position (U34) of certain tRNAs, forming tRNA-cmnm(5)s(2)U34. The protein is tRNA modification GTPase MnmE of Geobacter metallireducens (strain ATCC 53774 / DSM 7210 / GS-15).